A 584-amino-acid chain; its full sequence is J protein JJJ2 (584 aa).

The region spanning 13–77 (TYYSILGLTS…DQKLRYDRDL (65 aa)) is the J domain. A disordered region spans residues 216 to 312 (YSEDPNSCLG…FSSGSHDSNL (97 aa)). A Phosphoserine modification is found at S229. Positions 241–253 (QQQQQQQQQQQQQ) are enriched in low complexity. A compositionally biased stretch (basic and acidic residues) spans 269–282 (KDNKESKRESRVSP). Residues 299–312 (KTSTFSSGSHDSNL) are compositionally biased toward polar residues.

The protein resides in the cytoplasm. Its subcellular location is the nucleus. In Saccharomyces cerevisiae (strain YJM789) (Baker's yeast), this protein is J protein JJJ2 (JJJ2).